Consider the following 200-residue polypeptide: MKQRKLRAGDMALIGMFAALMAVGANITSVAPFLQVAGIPLSMQPFFCLLAALLLGSKRAAIAMIVYALVGLAGAPVFAQFSAGFAPFAGKSGGFIISYIPAAFAAGWFLERNIQPSKIRFLIASLIGTAIMYLIGTTYMYLALKLWIHTPVSYGTAWGFMIWFMVKDTALAVILSFIAPAIYRSIHKATGFNRNHISST.

6 consecutive transmembrane segments (helical) span residues 13 to 33 (LIGM…VAPF), 36 to 56 (VAGI…LLLG), 61 to 81 (AIAM…FAQF), 90 to 110 (GKSG…GWFL), 121 to 141 (FLIA…TYMY), and 158 to 178 (WGFM…LSFI).

Belongs to the BioY family.

The protein resides in the cell membrane. In terms of biological role, putative biotin transporter. In Bacillus subtilis (strain 168), this protein is Putative biotin transporter BioYB (bioYB).